The sequence spans 345 residues: Anthranilate phosphoribosyltransferase (345 aa).

5-phospho-alpha-D-ribose 1-diphosphate is bound by residues glycine 79, 82–83 (GD), threonine 87, 89–92 (NVST), 106–114 (KHGNRAVSG), and serine 118. Residue glycine 79 coordinates anthranilate. Serine 91 is a binding site for Mg(2+). Asparagine 109 is a binding site for anthranilate. Residue arginine 164 coordinates anthranilate. Mg(2+)-binding residues include aspartate 223 and glutamate 224.

The protein belongs to the anthranilate phosphoribosyltransferase family. In terms of assembly, homodimer. Mg(2+) is required as a cofactor.

It catalyses the reaction N-(5-phospho-beta-D-ribosyl)anthranilate + diphosphate = 5-phospho-alpha-D-ribose 1-diphosphate + anthranilate. It participates in amino-acid biosynthesis; L-tryptophan biosynthesis; L-tryptophan from chorismate: step 2/5. Its function is as follows. Catalyzes the transfer of the phosphoribosyl group of 5-phosphorylribose-1-pyrophosphate (PRPP) to anthranilate to yield N-(5'-phosphoribosyl)-anthranilate (PRA). In Saccharolobus islandicus (strain M.16.27) (Sulfolobus islandicus), this protein is Anthranilate phosphoribosyltransferase.